The sequence spans 89 residues: Small ribosomal subunit protein uS15 (89 aa).

The protein belongs to the universal ribosomal protein uS15 family. As to quaternary structure, part of the 30S ribosomal subunit. Forms a bridge to the 50S subunit in the 70S ribosome, contacting the 23S rRNA.

Its function is as follows. One of the primary rRNA binding proteins, it binds directly to 16S rRNA where it helps nucleate assembly of the platform of the 30S subunit by binding and bridging several RNA helices of the 16S rRNA. Functionally, forms an intersubunit bridge (bridge B4) with the 23S rRNA of the 50S subunit in the ribosome. This Burkholderia ambifaria (strain MC40-6) protein is Small ribosomal subunit protein uS15.